Reading from the N-terminus, the 162-residue chain is MHLADLIETTLNGMGYELVELERAPAGLLRVYIDQPETGIVIEDCEKVSRQLTHVLTVENVDYERLEVSSPGLDRPLKKLADYVRFAGAEARVTLRLPVNGQKNFTGILREPTGEAGAEKVGLEFEGKDGPALLEFTVSDVDKARLVPVIDFKGNQRKGNKQ.

This sequence belongs to the RimP family.

It localises to the cytoplasm. Its function is as follows. Required for maturation of 30S ribosomal subunits. This is Ribosome maturation factor RimP from Cupriavidus pinatubonensis (strain JMP 134 / LMG 1197) (Cupriavidus necator (strain JMP 134)).